We begin with the raw amino-acid sequence, 195 residues long: 3-isopropylmalate dehydratase small subunit (195 aa).

It belongs to the LeuD family. LeuD type 1 subfamily. As to quaternary structure, heterodimer of LeuC and LeuD.

It catalyses the reaction (2R,3S)-3-isopropylmalate = (2S)-2-isopropylmalate. Its pathway is amino-acid biosynthesis; L-leucine biosynthesis; L-leucine from 3-methyl-2-oxobutanoate: step 2/4. Functionally, catalyzes the isomerization between 2-isopropylmalate and 3-isopropylmalate, via the formation of 2-isopropylmaleate. The chain is 3-isopropylmalate dehydratase small subunit from Rubrobacter xylanophilus (strain DSM 9941 / JCM 11954 / NBRC 16129 / PRD-1).